A 343-amino-acid chain; its full sequence is Mating-type protein MAT-2 (343 aa).

Disordered stretches follow at residues 98-117 (RSPQVVSSPQSAQTSPSEQT) and 177-223 (KKPW…AAMT). Positions 99-117 (SPQVVSSPQSAQTSPSEQT) are enriched in low complexity. Positions 131 to 199 (APRPMNCWII…EHLRQHPNYK (69 aa)) form a DNA-binding region, HMG box. The segment covering 206–218 (GEKKKRQSRKSKR) has biased composition (basic residues).

It is found in the nucleus. This Cochliobolus heterostrophus (Southern corn leaf blight fungus) protein is Mating-type protein MAT-2 (MAT2).